A 251-amino-acid polypeptide reads, in one-letter code: MKITAIIPARYASTRFEGKALADIMGKPMVQHVYERTAKASLVSEVIVATDDERIAAAVHAFGGRAEMTSRVHETGTDRLAEVAARLDSDIIVNVQGDEPLIEPAMIDEAIKPLAEDSSVMMGTLKTRIKTLHDFLSPNVVKVVTDWEGYALYFSRSPLPNFRDKWNDLKDEAFASRKLLCYKHVGLYVYRRDFLLQFAQMSPTYLEMAEKLEQLRVLENGYRIKVVETDYESIGVDTPGDLEKVLERLKK.

Belongs to the KdsB family.

It localises to the cytoplasm. It carries out the reaction 3-deoxy-alpha-D-manno-oct-2-ulosonate + CTP = CMP-3-deoxy-beta-D-manno-octulosonate + diphosphate. Its pathway is nucleotide-sugar biosynthesis; CMP-3-deoxy-D-manno-octulosonate biosynthesis; CMP-3-deoxy-D-manno-octulosonate from 3-deoxy-D-manno-octulosonate and CTP: step 1/1. The protein operates within bacterial outer membrane biogenesis; lipopolysaccharide biosynthesis. Functionally, activates KDO (a required 8-carbon sugar) for incorporation into bacterial lipopolysaccharide in Gram-negative bacteria. In Geotalea uraniireducens (strain Rf4) (Geobacter uraniireducens), this protein is 3-deoxy-manno-octulosonate cytidylyltransferase.